The primary structure comprises 167 residues: MKMFSMLALFVIAADQFTKKLAVFFLRDMQQSITIIPDFFSFTYAENRGVAFGMEFAPPFVLLMLTGAIVLGVLVFVARSRNRTPIFLSAFGLIAGGGIGNMIDRIASGRVTDFIYFDLYKGELFGHWVSLWPIFNVADSAITIGACMLVLFYNRIFPDTEETRHAG.

The next 2 helical transmembrane spans lie at 56 to 76 and 84 to 104; these read FAPP…VLVF and TPIF…NMID. Active-site residues include Asp113 and Asp139. A helical transmembrane segment spans residues 132–152; that stretch reads WPIFNVADSAITIGACMLVLF.

This sequence belongs to the peptidase A8 family.

The protein localises to the cell inner membrane. It carries out the reaction Release of signal peptides from bacterial membrane prolipoproteins. Hydrolyzes -Xaa-Yaa-Zaa-|-(S,diacylglyceryl)Cys-, in which Xaa is hydrophobic (preferably Leu), and Yaa (Ala or Ser) and Zaa (Gly or Ala) have small, neutral side chains.. Its pathway is protein modification; lipoprotein biosynthesis (signal peptide cleavage). In terms of biological role, this protein specifically catalyzes the removal of signal peptides from prolipoproteins. This chain is Lipoprotein signal peptidase, found in Chlorobium luteolum (strain DSM 273 / BCRC 81028 / 2530) (Pelodictyon luteolum).